The following is a 487-amino-acid chain: DEAD-box ATP-dependent RNA helicase CshA (487 aa).

Residues 3–31 carry the Q motif motif; sequence ITFQDFQLSSDLTKAIKRMGFEEATPIQA. The 171-residue stretch at 34 to 204 folds into the Helicase ATP-binding domain; it reads IPLGLANKDV…ERFMTNPEHV (171 aa). 47-54 lines the ATP pocket; it reads AQTGTGKT. The short motif at 152–155 is the DEAD box element; the sequence is DEAD. A Helicase C-terminal domain is found at 215–375; it reads NIQQFYLEVH…RMKAPTLDEA (161 aa). Positions 428–440 are enriched in basic and acidic residues; sequence DNTPVRLTEEAPL. The disordered stretch occupies residues 428–487; that stretch reads DNTPVRLTEEAPLRTKRNKNHHHRSSKRRDGGGYRGKNNRSSYDKKRSSNDRRQKKSYNS. Over residues 441–454 the composition is skewed to basic residues; the sequence is RTKRNKNHHHRSSK. Positions 469-479 are enriched in basic and acidic residues; the sequence is SYDKKRSSNDR.

Belongs to the DEAD box helicase family. CshA subfamily. As to quaternary structure, oligomerizes, may be a member of the RNA degradosome.

The protein localises to the cytoplasm. The enzyme catalyses ATP + H2O = ADP + phosphate + H(+). Its function is as follows. DEAD-box RNA helicase possibly involved in RNA degradation. Unwinds dsRNA in both 5'- and 3'-directions, has RNA-dependent ATPase activity. This is DEAD-box ATP-dependent RNA helicase CshA from Bacillus licheniformis (strain ATCC 14580 / DSM 13 / JCM 2505 / CCUG 7422 / NBRC 12200 / NCIMB 9375 / NCTC 10341 / NRRL NRS-1264 / Gibson 46).